The primary structure comprises 999 residues: Hypoxia up-regulated protein 1 (999 aa).

The N-terminal stretch at 1-32 is a signal peptide; the sequence is MAATVRRQRPRRLLCWALVAVLLADLLALSDT. N-linked (GlcNAc...) asparagine glycosylation is found at Asn155, Asn222, and Asn515. Phosphoserine is present on Ser567. The disordered stretch occupies residues 567–694; the sequence is SPEEESTLTK…KKPKPARKQK (128 aa). The segment covering 574–583 has biased composition (polar residues); that stretch reads LTKLGNTISS. Asn596 carries an N-linked (GlcNAc...) asparagine glycan. Composition is skewed to basic and acidic residues over residues 611–626 and 641–668; these read GSKD…KEEA and PKGD…KPNE. Low complexity predominate over residues 669 to 680; it reads KGQAGPEGAAPA. N-linked (GlcNAc...) asparagine glycosylation is found at Asn830, Asn862, and Asn869. Lys883 is modified (N6-acetyllysine). The disordered stretch occupies residues 909 to 999; that stretch reads AKFTKPRPRP…QKRPSKNDEL (91 aa). Asn922 and Asn931 each carry an N-linked (GlcNAc...) asparagine glycan. A compositionally biased stretch (basic and acidic residues) spans 949–962; it reads EEAKPILEPDKEET. Positions 996–999 match the Prevents secretion from ER motif; that stretch reads NDEL.

This sequence belongs to the heat shock protein 70 family. Part of a large chaperone multiprotein complex comprising DNAJB11, HSP90B1, HSPA5, HYOU, PDIA2, PDIA4, PDIA6, PPIB, SDF2L1, UGGT1 and very small amounts of ERP29, but not, or at very low levels, CALR nor CANX.

It localises to the endoplasmic reticulum lumen. In terms of biological role, has a pivotal role in cytoprotective cellular mechanisms triggered by oxygen deprivation. Promotes HSPA5/BiP-mediated ATP nucleotide exchange and thereby activates the unfolded protein response (UPR) pathway in the presence of endoplasmic reticulum stress. May play a role as a molecular chaperone and participate in protein folding. This Mus musculus (Mouse) protein is Hypoxia up-regulated protein 1 (Hyou1).